The primary structure comprises 603 residues: MPRFITELKRTHSCGELTKADIGKEVVLFGWVNNRRDHGGAVFIDLRDRAGLTQVVFEEDVRPDVHELAGQLRLEYCVGVRGKVVSRGGNVNPKLRTGEIEVHASDLEIFNRSEPAPFQIEDEIDTGEEKRLQYRYLDLRRAPLQRTLMTRAKVNHLTRNYFTDGGFLELETPFMVKYTPGGARNFLVPSRLNPGKFYALAESPQLFKQLYMMAGFDRYFQIVRCFRDEDLRLDRQPEFTQIDVEMSFVEQNDVFDVMEGLVVKLWKEVLGIEIPRPFQRMPFEESMAKYGNDKPDLRFDMPHVVLTDLVRQHDGGGVPLMHEAVKGKGIVKAMRVPASANFSRTEIDKLEEYVKGMGAKGLARAKVGEGGEWTQSPLAKTITPALRQAINEACEAKPGDLLLFQFGKDSVVHTVMANLRVHLAKRMGLIPEYGSGGAWRFLWVVNPPLFEYDEESGQWAAAHHAFTRPHDSDLQFLESDPGKVNCYRYDLVLNGFEIGGGSIRLHDPEVQARVFKAMGISDEEARSKFGFLLDALKMGAPPHGGIALGMDRLVMLLTGAESLRDVVAWPKTQKGTDLMTGAPGDVDARQLRELYVKSTYEPK.

Positions 205-208 (QLFK) are aspartate. L-aspartate is bound at residue arginine 227. ATP contacts are provided by residues 227–229 (RDE) and glutamine 236. Histidine 463 is a binding site for L-aspartate. ATP is bound at residue glutamate 497. Arginine 504 is a binding site for L-aspartate. 549–552 (GMDR) provides a ligand contact to ATP.

This sequence belongs to the class-II aminoacyl-tRNA synthetase family. Type 1 subfamily. Homodimer.

Its subcellular location is the cytoplasm. It carries out the reaction tRNA(Asx) + L-aspartate + ATP = L-aspartyl-tRNA(Asx) + AMP + diphosphate. Functionally, aspartyl-tRNA synthetase with relaxed tRNA specificity since it is able to aspartylate not only its cognate tRNA(Asp) but also tRNA(Asn). Reaction proceeds in two steps: L-aspartate is first activated by ATP to form Asp-AMP and then transferred to the acceptor end of tRNA(Asp/Asn). The protein is Aspartate--tRNA(Asp/Asn) ligase of Anaeromyxobacter sp. (strain K).